Consider the following 564-residue polypeptide: Efflux pump DEP3 (564 aa).

The span at 1–12 (MVYSSTSSSQNR) shows a compositional bias: polar residues. The tract at residues 1-48 (MVYSSTSSSQNRPDGEKHVEAVGSSTRIPSDELVDRGGGDTTTGKQSP) is disordered. Over residues 29–38 (PSDELVDRGG) the composition is skewed to basic and acidic residues. 14 consecutive transmembrane segments (helical) span residues 65-85 (STTL…PAII), 91-111 (LELL…ILLW), 122-142 (WVYI…GAAP), 152-172 (VIAG…VSVL), 185-205 (STVV…AFAA), 212-232 (WGFY…FLLF), 255-275 (AVIF…GGVV), 281-301 (GTVI…IVLL), 332-352 (FLSS…FQFI), 362-382 (VRLL…GFLM), 386-406 (GLIP…TALM), 423-443 (ILIG…VQSL), 452-472 (AVGA…AISG), and 528-548 (TIWA…FPLL).

The protein belongs to the major facilitator superfamily. TCR/Tet family.

The protein localises to the cell membrane. Its function is as follows. Efflux pump; part of the gene cluster that mediates the biosynthesis of depudecin, a highly oxidized eleven-carbon linear polyketide that acts as a histone deacetylase (HDAC) inhibitor and makes a small contribution to pathogenesis. Is presumed either to be responsible for exporting depudecin, to provide self-protection, or both. This is Efflux pump DEP3 from Alternaria brassicicola (Dark leaf spot agent).